Here is a 486-residue protein sequence, read N- to C-terminus: MTTFYTVVSWLIILGYWLLIAGVTLRILMKRRAVPSAMAWLLVIYILPLVGIVAYLSVGELHLGKRRAERARAMWPSTAKWLNDLKACKHIFAEENSAVASALFQLCERRQGIAGVKGNQLQLLTSSDDVMQALIRDIQLARHNIEMVFYIWQPGGMADQVAESLMAAARRGVHCRLMLDSAGSVAFFRSPWAGMMRNAGIEVVEALKVNLMRVFLRRMDLRQHRKMIMIDNYIAYTGSMNMVDPRYFKQDAGVGQWVDLMARMEGPVATAMGIVYSCDWEIETGKRLLPPPPDANIMPFEQASGHTIHTIASGPGFPEDLIHQALLTSVYAAREYLIMTTPYFVPSDDLLHAICTAAQRGVDVSIILPRKNDSLLVGWASRAFFSELLAAGVKIYQFEGGLLHTKSVLVDGELSLVGTVNLDMRSLWLNFEITLVIDDAGFGADLAEVQDDYISRSRLLDARLWVKRPFWQRVVERLFYFFSPLL.

Transmembrane regions (helical) follow at residues 3-23 (TFYT…IAGV) and 38-58 (MAWL…YLSV). PLD phosphodiesterase domains are found at residues 219 to 246 (MDLR…VDPR) and 399 to 426 (EGGL…DMRS). Residues histidine 224, lysine 226, aspartate 231, histidine 404, lysine 406, and aspartate 411 contribute to the active site.

It belongs to the phospholipase D family. Cardiolipin synthase subfamily. ClsA sub-subfamily.

The protein resides in the cell inner membrane. The catalysed reaction is 2 a 1,2-diacyl-sn-glycero-3-phospho-(1'-sn-glycerol) = a cardiolipin + glycerol. Its function is as follows. Catalyzes the reversible phosphatidyl group transfer from one phosphatidylglycerol molecule to another to form cardiolipin (CL) (diphosphatidylglycerol) and glycerol. This is Cardiolipin synthase A from Cronobacter sakazakii (strain ATCC BAA-894) (Enterobacter sakazakii).